Consider the following 615-residue polypeptide: Protein DlpA (615 aa).

Belongs to the isocitrate and isopropylmalate dehydrogenases family. It to M.jannaschii MJ0644 in the C-terminal section.

In Legionella pneumophila subsp. pneumophila (strain Philadelphia 1 / ATCC 33152 / DSM 7513), this protein is Protein DlpA (dlpA).